Reading from the N-terminus, the 641-residue chain is Bifunctional protein glk (641 aa).

The glucokinase stretch occupies residues 1–340 (MSTGAQTKAA…QLSNRTGGAS (340 aa)). 23–28 (ADVGGT) serves as a coordination point for ATP. An HTH rpiR-type domain is found at 341-417 (SAVFERIRQM…LKLATGLTGT (77 aa)). The interval 341–641 (SAVFERIRQM…SHGAAPAAKD (301 aa)) is putative HTH-type transcriptional regulator. Residues 377–396 (IVDIARKADVSQPTVIRFCR) constitute a DNA-binding region (H-T-H motif). Residues 461–600 (AIDILNNARR…AVGVAIRRAA (140 aa)) form the SIS domain. Residues 576–596 (SMISRILHLVMIDILAVGVAI) form a helical membrane-spanning segment.

In the N-terminal section; belongs to the bacterial glucokinase family.

It localises to the membrane. It carries out the reaction D-glucose + ATP = D-glucose 6-phosphate + ADP + H(+). The sequence is that of Bifunctional protein glk (glk) from Burkholderia pseudomallei (strain 1710b).